Here is a 197-residue protein sequence, read N- to C-terminus: ADP-ribosylation factor 1 (197 aa).

Gly-2 carries the N-myristoyl glycine lipid modification. GTP is bound by residues Gly-24–Thr-31, Asp-67–Gln-71, and Asn-126–Asp-129.

It belongs to the small GTPase superfamily. Arf family.

It localises to the golgi apparatus. It catalyses the reaction GTP + H2O = GDP + phosphate + H(+). Functionally, GTP-binding protein involved in protein trafficking; may modulate vesicle budding and uncoating within the Golgi apparatus. This Solanum tuberosum (Potato) protein is ADP-ribosylation factor 1.